Consider the following 573-residue polypeptide: Dihydroxy-acid dehydratase (573 aa).

Residue C62 coordinates [2Fe-2S] cluster. D94 provides a ligand contact to Mg(2+). Residue C135 participates in [2Fe-2S] cluster binding. Positions 136 and 137 each coordinate Mg(2+). K137 bears the N6-carboxylysine mark. Residue C212 participates in [2Fe-2S] cluster binding. E463 serves as a coordination point for Mg(2+). The Proton acceptor role is filled by S489.

This sequence belongs to the IlvD/Edd family. As to quaternary structure, homodimer. [2Fe-2S] cluster serves as cofactor. It depends on Mg(2+) as a cofactor.

The catalysed reaction is (2R)-2,3-dihydroxy-3-methylbutanoate = 3-methyl-2-oxobutanoate + H2O. The enzyme catalyses (2R,3R)-2,3-dihydroxy-3-methylpentanoate = (S)-3-methyl-2-oxopentanoate + H2O. The protein operates within amino-acid biosynthesis; L-isoleucine biosynthesis; L-isoleucine from 2-oxobutanoate: step 3/4. It functions in the pathway amino-acid biosynthesis; L-valine biosynthesis; L-valine from pyruvate: step 3/4. Its function is as follows. Functions in the biosynthesis of branched-chain amino acids. Catalyzes the dehydration of (2R,3R)-2,3-dihydroxy-3-methylpentanoate (2,3-dihydroxy-3-methylvalerate) into 2-oxo-3-methylpentanoate (2-oxo-3-methylvalerate) and of (2R)-2,3-dihydroxy-3-methylbutanoate (2,3-dihydroxyisovalerate) into 2-oxo-3-methylbutanoate (2-oxoisovalerate), the penultimate precursor to L-isoleucine and L-valine, respectively. This chain is Dihydroxy-acid dehydratase, found in Arthrobacter sp. (strain FB24).